The sequence spans 634 residues: 1-deoxy-D-xylulose-5-phosphate synthase (634 aa).

Thiamine diphosphate-binding positions include His73 and 114–116; that span reads GHS. Asp145 lines the Mg(2+) pocket. Thiamine diphosphate-binding positions include 146 to 147, Asn174, Phe285, and Glu367; that span reads GS. Asn174 serves as a coordination point for Mg(2+).

This sequence belongs to the transketolase family. DXPS subfamily. In terms of assembly, homodimer. Mg(2+) serves as cofactor. Requires thiamine diphosphate as cofactor.

It carries out the reaction D-glyceraldehyde 3-phosphate + pyruvate + H(+) = 1-deoxy-D-xylulose 5-phosphate + CO2. The protein operates within metabolic intermediate biosynthesis; 1-deoxy-D-xylulose 5-phosphate biosynthesis; 1-deoxy-D-xylulose 5-phosphate from D-glyceraldehyde 3-phosphate and pyruvate: step 1/1. In terms of biological role, catalyzes the acyloin condensation reaction between C atoms 2 and 3 of pyruvate and glyceraldehyde 3-phosphate to yield 1-deoxy-D-xylulose-5-phosphate (DXP). The protein is 1-deoxy-D-xylulose-5-phosphate synthase of Syntrophotalea carbinolica (strain DSM 2380 / NBRC 103641 / GraBd1) (Pelobacter carbinolicus).